A 297-amino-acid chain; its full sequence is MALRLATRRFAPIAFRRGMATTIEHTKEPISATAEALSASRPPIKETKTSTVKEPQMDADAKTKTFHIYRWNPDQPTDKPRMQSYTLDLNKTGPMMLDALIRIKNEVDPTLTFRRSCREGICGSCAMNIDGVNTLACLCRIPTDTAKETRIYPLPHTYVVKDLVPDMTQFYKQYKSIKPYLQRDTAPPDGKENRQSVADRKKLDGLYECILCACCSTSCPSYWWNSEEYLGPAVLLQSYRWINDSRDEKTAQRKDALNNSMSLYRCHTILNCSRTCPKGLNPALAIAEIKKSMAFTG.

Positions 33 to 55 (TAEALSASRPPIKETKTSTVKEP) are disordered. The 2Fe-2S ferredoxin-type domain occupies 78–157 (DKPRMQSYTL…ETRIYPLPHT (80 aa)). [2Fe-2S] cluster-binding residues include Cys-117, Cys-122, Cys-125, and Cys-137. The 4Fe-4S ferredoxin-type domain maps to 199–229 (DRKKLDGLYECILCACCSTSCPSYWWNSEEY). [4Fe-4S] cluster contacts are provided by Cys-209, Cys-212, and Cys-215. Residue Cys-219 coordinates [3Fe-4S] cluster. Position 224 (Trp-224) interacts with a ubiquinone. Cys-266 and Cys-272 together coordinate [3Fe-4S] cluster. Cys-276 contributes to the [4Fe-4S] cluster binding site.

Belongs to the succinate dehydrogenase/fumarate reductase iron-sulfur protein family. Component of complex II composed of four subunits: a flavoprotein (FP), an iron-sulfur protein (IP), and a cytochrome b composed of a large and a small subunit. [2Fe-2S] cluster serves as cofactor. It depends on [3Fe-4S] cluster as a cofactor. The cofactor is [4Fe-4S] cluster.

It is found in the mitochondrion inner membrane. It carries out the reaction a quinone + succinate = fumarate + a quinol. Its pathway is carbohydrate metabolism; tricarboxylic acid cycle; fumarate from succinate (eukaryal route): step 1/1. In terms of biological role, iron-sulfur protein (IP) subunit of succinate dehydrogenase (SDH) that is involved in complex II of the mitochondrial electron transport chain and is responsible for transferring electrons from succinate to ubiquinone (coenzyme Q). The polypeptide is Succinate dehydrogenase [ubiquinone] iron-sulfur subunit, mitochondrial (SDH2) (Zymoseptoria tritici (Speckled leaf blotch fungus)).